We begin with the raw amino-acid sequence, 399 residues long: Imidazolonepropionase (399 aa).

A compositionally biased stretch (polar residues) spans 1–13 (MSETLYTGISQLA). The tract at residues 1–20 (MSETLYTGISQLATPRPGPQ) is disordered. Residues histidine 74 and histidine 76 each coordinate Fe(3+). Zn(2+) is bound by residues histidine 74 and histidine 76. Arginine 83, tyrosine 146, and histidine 176 together coordinate 4-imidazolone-5-propanoate. An N-formimidoyl-L-glutamate-binding site is contributed by tyrosine 146. A Fe(3+)-binding site is contributed by histidine 238. Position 238 (histidine 238) interacts with Zn(2+). Residue glutamine 241 coordinates 4-imidazolone-5-propanoate. Fe(3+) is bound at residue aspartate 312. Aspartate 312 contacts Zn(2+). N-formimidoyl-L-glutamate contacts are provided by asparagine 314 and glycine 316. Residue serine 317 coordinates 4-imidazolone-5-propanoate.

This sequence belongs to the metallo-dependent hydrolases superfamily. HutI family. It depends on Zn(2+) as a cofactor. Fe(3+) is required as a cofactor.

The protein resides in the cytoplasm. It catalyses the reaction 4-imidazolone-5-propanoate + H2O = N-formimidoyl-L-glutamate. Its pathway is amino-acid degradation; L-histidine degradation into L-glutamate; N-formimidoyl-L-glutamate from L-histidine: step 3/3. In terms of biological role, catalyzes the hydrolytic cleavage of the carbon-nitrogen bond in imidazolone-5-propanoate to yield N-formimidoyl-L-glutamate. It is the third step in the universal histidine degradation pathway. In Deinococcus radiodurans (strain ATCC 13939 / DSM 20539 / JCM 16871 / CCUG 27074 / LMG 4051 / NBRC 15346 / NCIMB 9279 / VKM B-1422 / R1), this protein is Imidazolonepropionase.